The primary structure comprises 557 residues: Dihydroxy-acid dehydratase (557 aa).

A [2Fe-2S] cluster-binding site is contributed by C49. D81 serves as a coordination point for Mg(2+). C122 is a binding site for [2Fe-2S] cluster. Residues D123 and K124 each contribute to the Mg(2+) site. The residue at position 124 (K124) is an N6-carboxylysine. C194 is a [2Fe-2S] cluster binding site. Mg(2+) is bound at residue E446. The Proton acceptor role is filled by S472.

It belongs to the IlvD/Edd family. Homodimer. It depends on [2Fe-2S] cluster as a cofactor. Requires Mg(2+) as cofactor.

It carries out the reaction (2R)-2,3-dihydroxy-3-methylbutanoate = 3-methyl-2-oxobutanoate + H2O. The catalysed reaction is (2R,3R)-2,3-dihydroxy-3-methylpentanoate = (S)-3-methyl-2-oxopentanoate + H2O. The protein operates within amino-acid biosynthesis; L-isoleucine biosynthesis; L-isoleucine from 2-oxobutanoate: step 3/4. Its pathway is amino-acid biosynthesis; L-valine biosynthesis; L-valine from pyruvate: step 3/4. Its function is as follows. Functions in the biosynthesis of branched-chain amino acids. Catalyzes the dehydration of (2R,3R)-2,3-dihydroxy-3-methylpentanoate (2,3-dihydroxy-3-methylvalerate) into 2-oxo-3-methylpentanoate (2-oxo-3-methylvalerate) and of (2R)-2,3-dihydroxy-3-methylbutanoate (2,3-dihydroxyisovalerate) into 2-oxo-3-methylbutanoate (2-oxoisovalerate), the penultimate precursor to L-isoleucine and L-valine, respectively. This chain is Dihydroxy-acid dehydratase, found in Prochlorococcus marinus (strain MIT 9215).